The sequence spans 56 residues: Ovomucoid (56 aa).

The Kazal-like domain maps to 6–56 (VDCSDHPKPACLQEQKPLCGSDNKTYDNKCSFCNAVVDSNGTLTLSHFGKC). Intrachain disulfides connect C8–C38, C16–C35, and C24–C56. N-linked (GlcNAc...) asparagine glycosylation is present at N45.

The protein resides in the secreted. The sequence is that of Ovomucoid from Penelope jacquacu (Spix's guan).